Here is a 478-residue protein sequence, read N- to C-terminus: DKDSYKVSGGLHGVGVSCVNALSTDMKVTVYSHGKVHQQEYKKGIPQYDVKEIGESDLHGTKVQFLPDDTIFTSSEYKYETIANRLRELSFLNKGIRITLQDHRQVDAEGKSEIEMFHSEGGLREFVDYLDSTREKLIPTPLYMESDKGPIPVEVAMLYNTSYSENVFSYVNNINTIEGGTHVAGFRRALTRTLKSYADKSGMLEKLKMEVTGDDFREGLTAVISVKVQEPQFEGQTKTKLGNSDVMGAVDQVVGEMLNTYLEENPKEAKIIVQKVILAAQARNAARKAREMVQRKNVLSGSGLPGKLADCSESDPEKCELYLVEGDSAGGSAKQGRDRKYHAILPLRGKILNVEKAQEHRIYENDEIKNMITALGVSFGTEEGEKVLNLTKLRYHKVIIMTDADIDGSHIRTLILTFFFRYMRALIDGGHVYIAQPPLYLVKRGKEEKYCWTEEQREAAVKELAKDGKEDSVGIQRY.

In terms of domain architecture, Toprim spans cysteine 319–proline 438. Mg(2+) contacts are provided by glutamate 325, aspartate 403, and aspartate 405.

The protein belongs to the type II topoisomerase GyrB family. Heterotetramer, composed of two GyrA and two GyrB chains. In the heterotetramer, GyrA contains the active site tyrosine that forms a transient covalent intermediate with DNA, while GyrB binds cofactors and catalyzes ATP hydrolysis. Requires Mg(2+) as cofactor. Mn(2+) serves as cofactor. The cofactor is Ca(2+).

It is found in the cytoplasm. It carries out the reaction ATP-dependent breakage, passage and rejoining of double-stranded DNA.. Its function is as follows. A type II topoisomerase that negatively supercoils closed circular double-stranded (ds) DNA in an ATP-dependent manner to modulate DNA topology and maintain chromosomes in an underwound state. Negative supercoiling favors strand separation, and DNA replication, transcription, recombination and repair, all of which involve strand separation. Also able to catalyze the interconversion of other topological isomers of dsDNA rings, including catenanes and knotted rings. Type II topoisomerases break and join 2 DNA strands simultaneously in an ATP-dependent manner. The protein is DNA gyrase subunit B (gyrB) of Cytophaga hutchinsonii.